A 478-amino-acid chain; its full sequence is Septin-4 (478 aa).

Disordered stretches follow at residues 40–74 and 87–115; these read DFSG…LYDD and ADNQ…LDPY. Residues 95-108 show a composition bias toward low complexity; it reads APAPLSPSARPRSP. 2 positions are modified to phosphoserine: Ser117 and Ser118. The Septin-type G domain occupies 141-414; that stretch reads KGFDFTLMVA…ENYRAQCIQS (274 aa). A G1 motif region spans residues 151 to 158; the sequence is GESGLGKS. Residues 151–158 and Thr185 contribute to the GTP site; that span reads GESGLGKS. A G3 motif region spans residues 208 to 211; the sequence is DTPG. The interval 289-292 is G4 motif; that stretch reads AKAD. Position 290–298 (290–298) interacts with GTP; that stretch reads KADTLTPPE. Ser325 carries the post-translational modification Phosphoserine. 2 residues coordinate GTP: Gly348 and Arg363. The segment at 428-448 is disordered; the sequence is LTRESGTDFPIPAVPPGTDPE. Position 432 is a phosphoserine (Ser432). Thr434 carries the post-translational modification Phosphothreonine. The stretch at 446 to 478 forms a coiled coil; the sequence is DPETEKLIREKDEELRRMQEILHKIQKQMKETY.

It belongs to the TRAFAC class TrmE-Era-EngA-EngB-Septin-like GTPase superfamily. Septin GTPase family. As to quaternary structure, septins polymerize into heterooligomeric protein complexes that form filaments, and can associate with cellular membranes, actin filaments and microtubules. GTPase activity is required for filament formation. Interacts with SEPTIN8. Component of a septin core octameric complex consisting of SEPTIN12, SEPTIN7, SEPTIN6 and SEPTIN2 or SEPTIN4 in the order 12-7-6-2-2-6-7-12 or 12-7-6-4-4-6-7-12. Interacts with SEPTIN14 (via C-terminus). Interacts with DYRK1A. Interacts with SLC6A3/DAT and SNCA/alpha-synuclein. Interacts with STX1A; in the striatum. Interacts with XIAP (via BIR3 domain) following the induction of apoptosis. Interacts with AREL1 (via HECT domain); in the cytoplasm following induction of apoptosis. In terms of processing, ubiquitinated by AREL1. Post-translationally, phosphorylated by DYRK1A.

Its subcellular location is the cytoplasm. It localises to the cell projection. The protein localises to the cilium. The protein resides in the flagellum. It is found in the cytoplasmic vesicle. Its subcellular location is the secretory vesicle. It localises to the axon. The protein localises to the dendrite. The protein resides in the perikaryon. It is found in the synapse. Functionally, filament-forming cytoskeletal GTPase. Pro-apoptotic protein involved in LGR5-positive intestinal stem cell and Paneth cell expansion in the intestines, via its interaction with XIAP. May also play a role in the regulation of cell fate in the intestine. Positive regulator of apoptosis involved in hematopoietic stem cell homeostasis; via its interaction with XIAP. Negative regulator of repair and hair follicle regeneration in response to injury, due to inhibition of hair follicle stem cell proliferation, potentially via its interaction with XIAP. Plays an important role in male fertility and sperm motility. During spermiogenesis, essential for the establishment of the annulus (a fibrous ring structure connecting the midpiece and the principal piece of the sperm flagellum) which is a requisite for the structural and mechanical integrity of the sperm. Involved in the migration of cortical neurons and the formation of neuron leading processes during embryonic development. Required for dopaminergic metabolism in presynaptic autoreceptors; potentially via activity as a presynaptic scaffold protein. This chain is Septin-4, found in Macaca fascicularis (Crab-eating macaque).